The primary structure comprises 352 residues: Glycoprotein integral membrane protein 1 (352 aa).

An N-terminal signal peptide occupies residues 1-25; it reads MASRCKIHLTVAYLLILCILASAQS. Residues 26–281 are Extracellular-facing; the sequence is KQMTTETVVL…KLRRFLSDSV (256 aa). 6 N-linked (GlcNAc...) asparagine glycosylation sites follow: asparagine 36, asparagine 44, asparagine 89, asparagine 109, asparagine 151, and asparagine 197. The interval 206 to 245 is disordered; that stretch reads NSETTQEEIAAPGKLPETPLRMDPETLYESREEEERRSDS. The span at 225-244 shows a compositional bias: basic and acidic residues; it reads LRMDPETLYESREEEERRSD. Residues 282–302 form a helical membrane-spanning segment; sequence PLFFLVMWVVVVGVAGSAVVI. Over 303–352 the chain is Cytoplasmic; the sequence is KILDLIFPSCEHRGFFHLNPETLMPDDEKVSLIDNMEGDMTEKSILLIEK.

It localises to the membrane. This Danio rerio (Zebrafish) protein is Glycoprotein integral membrane protein 1 (ginm1).